The following is a 495-amino-acid chain: L-arabinose isomerase (495 aa).

Positions 305, 332, 349, and 448 each coordinate Mn(2+).

It belongs to the arabinose isomerase family. It depends on Mn(2+) as a cofactor.

It carries out the reaction beta-L-arabinopyranose = L-ribulose. The protein operates within carbohydrate degradation; L-arabinose degradation via L-ribulose; D-xylulose 5-phosphate from L-arabinose (bacterial route): step 1/3. Its function is as follows. Catalyzes the conversion of L-arabinose to L-ribulose. The protein is L-arabinose isomerase of Actinobacillus succinogenes (strain ATCC 55618 / DSM 22257 / CCUG 43843 / 130Z).